We begin with the raw amino-acid sequence, 311 residues long: Homeobox-leucine zipper protein HOX13 (311 aa).

The interval 1-74 (MKRPTSSSRK…PSCGLGEKKR (74 aa)) is disordered. Over residues 35-54 (DEAEMEEVDEEEEEEVDEDM) the composition is skewed to acidic residues. Residues 69–128 (LGEKKRRLALEQVRALERSFDTDNKLDPDRKARIARDLGLQPRQVAVWFQNRRARWKTKQ) constitute a DNA-binding region (homeobox). Residues 127–171 (KQLERDFAALRARHDALRADCDALRRDKDALAAEIRELREKLPTK) are leucine-zipper.

Belongs to the HD-ZIP homeobox family. Class I subfamily. Expressed in seedlings, roots, stems, leaf sheaths and blades and panicles.

The protein localises to the nucleus. In terms of biological role, probable transcription factor. This Oryza sativa subsp. japonica (Rice) protein is Homeobox-leucine zipper protein HOX13 (HOX13).